The chain runs to 351 residues: Protein Wnt-2b-A (351 aa).

Residues 1–16 (MHFAYILILLILTPRV) form the signal peptide. Cystine bridges form between C67-C78, C118-C126, C128-C148, C197-C211, C199-C206, C269-C300, C285-C295, C299-C339, C315-C330, C317-C327, and C322-C323. An N-linked (GlcNAc...) asparagine glycan is attached at N77. S203 is lipidated: O-palmitoleoyl serine; by PORCN.

Belongs to the Wnt family. Palmitoleoylation is required for efficient binding to frizzled receptors. Depalmitoleoylation leads to Wnt signaling pathway inhibition. In terms of tissue distribution, expressed maternally in both vegetal and animal blastomeres with enrichment in the animal hemisphere. Expressed zygotically near the prosencephalic-mesencephalic boundary of the developing brain in neurula and tailbud stages, and also in non-brain areas at tadpole stages.

It localises to the secreted. The protein localises to the extracellular space. It is found in the extracellular matrix. Its function is as follows. Ligand for members of the frizzled family of seven transmembrane receptors. Functions in the canonical Wnt/beta-catenin signaling pathway. The chain is Protein Wnt-2b-A (wnt2b-a) from Xenopus laevis (African clawed frog).